A 317-amino-acid chain; its full sequence is Protein phosphatase 1 regulatory subunit 3C-B (317 aa).

The CBM21 domain occupies 150–258 (RNRLKKNLVC…NNDGKNYKLV (109 aa)).

In terms of assembly, interacts with PPP1CC catalytic subunit of PP1 and associates with glycogen. Forms complexes with glycogen phosphorylase, glycogen synthase and phosphorylase kinase which is necessary for its regulation of PP1 activity.

Acts as a glycogen-targeting subunit for PP1 and regulates its activity. Activates glycogen synthase, reduces glycogen phosphorylase activity and limits glycogen breakdown. In Danio rerio (Zebrafish), this protein is Protein phosphatase 1 regulatory subunit 3C-B (ppp1r3cb).